We begin with the raw amino-acid sequence, 43 residues long: uncharacterized protein (43 aa).

The signal sequence occupies residues 1–22 (MKRKIIAIGIFFRLFIIHIHFS).

This is an uncharacterized protein from Schizosaccharomyces pombe (strain 972 / ATCC 24843) (Fission yeast).